Reading from the N-terminus, the 611-residue chain is Procollagen galactosyltransferase 1-A (611 aa).

Positions 1–24 (MSQAGVDRLLRGLQLLLLVLRLSA) are cleaved as a signal peptide. 5 N-linked (GlcNAc...) asparagine glycosylation sites follow: asparagine 85, asparagine 173, asparagine 312, asparagine 370, and asparagine 568. Residues 575-591 (WDRAKSRKTQQQEKLRS) are compositionally biased toward basic and acidic residues. The tract at residues 575 to 611 (WDRAKSRKTQQQEKLRSEALNSPSLGSPFDNTARDEL) is disordered. The Prevents secretion from ER signature appears at 608-611 (RDEL).

Belongs to the glycosyltransferase 25 family.

It is found in the endoplasmic reticulum lumen. It catalyses the reaction (5R)-5-hydroxy-L-lysyl-[collagen] + UDP-alpha-D-galactose = (5R)-5-O-(beta-D-galactosyl)-5-hydroxy-L-lysyl-[collagen] + UDP + H(+). Its function is as follows. Beta-galactosyltransferase that transfers beta-galactose to hydroxylysine residues of type I collagen. By acting on collagen glycosylation, facilitates the formation of collagen triple helix. The chain is Procollagen galactosyltransferase 1-A (colgalt1-a) from Xenopus laevis (African clawed frog).